The sequence spans 273 residues: tRNA pseudouridine synthase B (273 aa).

Catalysis depends on Asp38, which acts as the Nucleophile.

Belongs to the pseudouridine synthase TruB family. Type 1 subfamily.

It catalyses the reaction uridine(55) in tRNA = pseudouridine(55) in tRNA. Responsible for synthesis of pseudouridine from uracil-55 in the psi GC loop of transfer RNAs. The protein is tRNA pseudouridine synthase B of Sulfurimonas denitrificans (strain ATCC 33889 / DSM 1251) (Thiomicrospira denitrificans (strain ATCC 33889 / DSM 1251)).